We begin with the raw amino-acid sequence, 447 residues long: N-succinylarginine dihydrolase (447 aa).

Residues 19–28, N110, and 137–138 each bind substrate; these read AGLSFGNEAS and HR. Residue E174 is part of the active site. R212 contacts substrate. H248 is a catalytic residue. Substrate is bound by residues D250 and N359. The Nucleophile role is filled by C365.

Belongs to the succinylarginine dihydrolase family. In terms of assembly, homodimer.

The catalysed reaction is N(2)-succinyl-L-arginine + 2 H2O + 2 H(+) = N(2)-succinyl-L-ornithine + 2 NH4(+) + CO2. The protein operates within amino-acid degradation; L-arginine degradation via AST pathway; L-glutamate and succinate from L-arginine: step 2/5. Functionally, catalyzes the hydrolysis of N(2)-succinylarginine into N(2)-succinylornithine, ammonia and CO(2). The polypeptide is N-succinylarginine dihydrolase (Salmonella paratyphi A (strain ATCC 9150 / SARB42)).